The chain runs to 55 residues: Neurotoxin B-IV (55 aa).

Pro10 carries the post-translational modification Hydroxyproline. 4 disulfide bridges follow: Cys12–Cys52, Cys16–Cys48, Cys23–Cys41, and Cys26–Cys37.

The protein belongs to the worm B-toxin family.

The protein resides in the secreted. This toxin increases the excitability of nerves by delaying the inactivation of the voltage-gated sodium channel (Nav). Only acts on some crustacean. Is more abundant, but 15-fold less toxic than neurotoxin B-II. The sequence is that of Neurotoxin B-IV from Cerebratulus lacteus (Milky ribbon worm).